Consider the following 150-residue polypeptide: Protein Turandot X (150 aa).

The signal sequence occupies residues 1 to 22 (MGLHIGSLLICVFLGILPFATA). The interval 127-150 (REEGQSNHANSPTTLPSRIQKMTK) is disordered. Over residues 132 to 150 (SNHANSPTTLPSRIQKMTK) the composition is skewed to polar residues.

This sequence belongs to the Turandot family.

It localises to the secreted. Functionally, a humoral factor that may play a role in stress tolerance. The sequence is that of Protein Turandot X from Drosophila simulans (Fruit fly).